The chain runs to 227 residues: Enolase-phosphatase E1 (227 aa).

This sequence belongs to the HAD-like hydrolase superfamily. MasA/MtnC family. As to quaternary structure, monomer. Mg(2+) serves as cofactor.

The enzyme catalyses 5-methylsulfanyl-2,3-dioxopentyl phosphate + H2O = 1,2-dihydroxy-5-(methylsulfanyl)pent-1-en-3-one + phosphate. The protein operates within amino-acid biosynthesis; L-methionine biosynthesis via salvage pathway; L-methionine from S-methyl-5-thio-alpha-D-ribose 1-phosphate: step 3/6. Its pathway is amino-acid biosynthesis; L-methionine biosynthesis via salvage pathway; L-methionine from S-methyl-5-thio-alpha-D-ribose 1-phosphate: step 4/6. Functionally, bifunctional enzyme that catalyzes the enolization of 2,3-diketo-5-methylthiopentyl-1-phosphate (DK-MTP-1-P) into the intermediate 2-hydroxy-3-keto-5-methylthiopentenyl-1-phosphate (HK-MTPenyl-1-P), which is then dephosphorylated to form the acireductone 1,2-dihydroxy-3-keto-5-methylthiopentene (DHK-MTPene). The chain is Enolase-phosphatase E1 from Persephonella marina (strain DSM 14350 / EX-H1).